Here is an 85-residue protein sequence, read N- to C-terminus: Phosphocarrier protein HPr (85 aa).

Residues 1 to 85 (MFQQEVTITA…HLVKLMAELE (85 aa)) enclose the HPr domain. His15 serves as the catalytic Pros-phosphohistidine intermediate.

Its subcellular location is the cytoplasm. In terms of biological role, general (non sugar-specific) component of the phosphoenolpyruvate-dependent sugar phosphotransferase system (sugar PTS). This major carbohydrate active-transport system catalyzes the phosphorylation of incoming sugar substrates concomitantly with their translocation across the cell membrane. The phosphoryl group from phosphoenolpyruvate (PEP) is transferred to the phosphoryl carrier protein HPr by enzyme I. Phospho-HPr then transfers it to the PTS EIIA domain. This is Phosphocarrier protein HPr (ptsH) from Klebsiella pneumoniae.